The following is a 390-amino-acid chain: Dual-specificity RNA methyltransferase RlmN (390 aa).

Glu-110 functions as the Proton acceptor in the catalytic mechanism. The Radical SAM core domain occupies Glu-116–Asp-355. A disulfide bridge links Cys-123 with Cys-360. [4Fe-4S] cluster contacts are provided by Cys-130, Cys-134, and Cys-137. S-adenosyl-L-methionine-binding positions include Gly-184 to Glu-185, Ser-216, Ser-238 to His-240, and Asn-317. The active-site S-methylcysteine intermediate is the Cys-360.

The protein belongs to the radical SAM superfamily. RlmN family. It depends on [4Fe-4S] cluster as a cofactor.

The protein localises to the cytoplasm. The enzyme catalyses adenosine(2503) in 23S rRNA + 2 reduced [2Fe-2S]-[ferredoxin] + 2 S-adenosyl-L-methionine = 2-methyladenosine(2503) in 23S rRNA + 5'-deoxyadenosine + L-methionine + 2 oxidized [2Fe-2S]-[ferredoxin] + S-adenosyl-L-homocysteine. It catalyses the reaction adenosine(37) in tRNA + 2 reduced [2Fe-2S]-[ferredoxin] + 2 S-adenosyl-L-methionine = 2-methyladenosine(37) in tRNA + 5'-deoxyadenosine + L-methionine + 2 oxidized [2Fe-2S]-[ferredoxin] + S-adenosyl-L-homocysteine. In terms of biological role, specifically methylates position 2 of adenine 2503 in 23S rRNA and position 2 of adenine 37 in tRNAs. m2A2503 modification seems to play a crucial role in the proofreading step occurring at the peptidyl transferase center and thus would serve to optimize ribosomal fidelity. This is Dual-specificity RNA methyltransferase RlmN from Haemophilus influenzae (strain ATCC 51907 / DSM 11121 / KW20 / Rd).